The following is a 177-amino-acid chain: Large ribosomal subunit protein uL6 (177 aa).

The protein belongs to the universal ribosomal protein uL6 family. Part of the 50S ribosomal subunit.

Functionally, this protein binds to the 23S rRNA, and is important in its secondary structure. It is located near the subunit interface in the base of the L7/L12 stalk, and near the tRNA binding site of the peptidyltransferase center. The chain is Large ribosomal subunit protein uL6 from Dinoroseobacter shibae (strain DSM 16493 / NCIMB 14021 / DFL 12).